Consider the following 417-residue polypeptide: Serine hydroxymethyltransferase (417 aa).

Residues leucine 121 and 125–127 each bind (6S)-5,6,7,8-tetrahydrofolate; that span reads GHL. Lysine 229 bears the N6-(pyridoxal phosphate)lysine mark. A (6S)-5,6,7,8-tetrahydrofolate-binding site is contributed by 355–357; it reads SPF.

This sequence belongs to the SHMT family. In terms of assembly, homodimer. The cofactor is pyridoxal 5'-phosphate.

The protein resides in the cytoplasm. It carries out the reaction (6R)-5,10-methylene-5,6,7,8-tetrahydrofolate + glycine + H2O = (6S)-5,6,7,8-tetrahydrofolate + L-serine. The protein operates within one-carbon metabolism; tetrahydrofolate interconversion. It functions in the pathway amino-acid biosynthesis; glycine biosynthesis; glycine from L-serine: step 1/1. Catalyzes the reversible interconversion of serine and glycine with tetrahydrofolate (THF) serving as the one-carbon carrier. This reaction serves as the major source of one-carbon groups required for the biosynthesis of purines, thymidylate, methionine, and other important biomolecules. Also exhibits THF-independent aldolase activity toward beta-hydroxyamino acids, producing glycine and aldehydes, via a retro-aldol mechanism. The protein is Serine hydroxymethyltransferase of Photorhabdus laumondii subsp. laumondii (strain DSM 15139 / CIP 105565 / TT01) (Photorhabdus luminescens subsp. laumondii).